The sequence spans 4363 residues: AM-toxin synthetase AMT1 (4363 aa).

The adenylation 1 stretch occupies residues 278-670 (AGQAKQRPHA…GSLLYVGRKD (393 aa)). Residues 810 to 887 (APDSVIARQL…ALAAIAKVIP (78 aa)) form the Carrier 1 domain. S847 bears the O-(pantetheine 4'-phosphoryl)serine mark. Residues 926–1340 (EDVYACTPLQ…TLGQIDVLTS (415 aa)) are condensation 1. Residues 1368–1765 (KQARTRPGAI…LGRKDTQIKI (398 aa)) are adenylation 2. Residues 1884–1961 (PPVTDMEKHV…DQARHVTLLT (78 aa)) form the Carrier 2 domain. S1922 is modified (O-(pantetheine 4'-phosphoryl)serine). Positions 1999 to 2410 (EDVYPCTPLQ…ASPSSSTLVS (412 aa)) are condensation 2. The segment at 2448 to 2853 (RKKALAAPQA…GRKDNQVKIR (406 aa)) is adenylation 3. Residues 2977–3053 (LPSTVMEETL…DLAACCTDRR (77 aa)) enclose the Carrier 3 domain. S3014 is subject to O-(pantetheine 4'-phosphoryl)serine. A condensation 3 region spans residues 3098–3503 (VEDVYPCTPM…ELVSSIETLN (406 aa)). The Carrier 4 domain occupies 3730 to 3806 (PAVTAMQLAI…SLAVRATENT (77 aa)). The residue at position 3767 (S3767) is an O-(pantetheine 4'-phosphoryl)serine. Residues 3850 to 4204 (QDVLPCTSMQ…GLDEIVEHYA (355 aa)) form a condensation 4 region.

The protein belongs to the NRP synthetase family.

The protein operates within mycotoxin biosynthesis. Its function is as follows. Nonribosomal peptide synthetase; part of the gene clusters that mediate the biosynthesis of AM-toxins, host-selective toxins (HSTs) causing Alternaria blotch on apple, a worldwide distributed disease. AM-toxins are cyclic depsipeptides containing the 3 residues 2-hydroxy-isovaleric acid (2-HIV), dehydroalanine, L-alanine which are common for all 3 AM-toxins I to III. The fourth precursor is L-alpha-amino-methoxyphenyl-valeric acid (L-Amv) for AM-toxin I, L-alpha-amino-phenyl-valeric acid (L-Apv) for AM-toxin II, and L-alpha-amino-hydroxyphenyl-valeric acid (L-Ahv) for AM-toxin III. AM-toxins have two target sites for affecting susceptible apple cells; they cause invagination of the plasma membrane and electrolyte loss, and chloroplast disorganization. The non-ribosomal peptide synthetase AMT1 contains 4 catalytic modules and is responsible for activation of each residue in AM-toxin. The aldo-keto reductase AMT2 catalyzes the conversion of 2-keto-isovaleric acid (2-KIV) to 2-hydroxy-isovaleric acid (2-HIV), one of the precursor residues incorporated by AMT1 during AM-toxin biosynthesis, by reduction of its ketone to an alcohol. The cytochrome P450 monooxygenase AMT3 and the thioesterase AMT4 are also important for AM-toxin production, but their exact function within the AM-toxin biosynthesis are not known yet. Up to 21 proteins (including AMT1 to AMT4) are predicted to be involved in AM-toxin biosynthesis since their expression ishighly up-regulated in AM-toxin-producing cultures. This is AM-toxin synthetase AMT1 from Alternaria alternata (Alternaria rot fungus).